We begin with the raw amino-acid sequence, 513 residues long: Acetylcholine receptor subunit delta (513 aa).

The signal sequence occupies residues 1–18; it reads MAVLLALFGALVLSGGLC. Residues 19 to 244 are Extracellular-facing; it reads VNQEERLIHH…ITFYLIIKRK (226 aa). N-linked (GlcNAc...) asparagine glycosylation is found at asparagine 88 and asparagine 161. A disulfide bridge links cysteine 148 with cysteine 162. The next 3 membrane-spanning stretches (helical) occupy residues 245 to 269, 277 to 295, and 311 to 332; these read PLFY…VFYL, MTLV…LLVS, and YLLF…VLNF. Over 333-467 the chain is Cytoplasmic; it reads HFRTPSTHVM…WNRVARTLDR (135 aa). At tyrosine 388 the chain carries Phosphotyrosine; by Tyr-kinases. The helical transmembrane segment at 468–490 threads the bilayer; the sequence is LCLFLITPMLVVGTLWIFLMGIY.

The protein belongs to the ligand-gated ion channel (TC 1.A.9) family. Acetylcholine receptor (TC 1.A.9.1) subfamily. In terms of assembly, pentamer of two alpha chains, and one each of the beta, delta, and gamma chains.

The protein resides in the postsynaptic cell membrane. Its subcellular location is the cell membrane. It carries out the reaction K(+)(in) = K(+)(out). The catalysed reaction is Na(+)(in) = Na(+)(out). After binding acetylcholine, the AChR responds by an extensive change in conformation that affects all subunits and leads to opening of an ion-conducting channel across the plasma membrane. This is Acetylcholine receptor subunit delta (CHRND) from Gallus gallus (Chicken).